The primary structure comprises 319 residues: NADH-ubiquinone oxidoreductase chain 1 (319 aa).

Helical transmembrane passes span 5-25 (TINS…LTLM), 72-92 (LLIS…TPIP), 102-122 (LGLL…LWAG), 146-166 (VTLG…TMQL), 173-193 (FTWL…STLA), 225-245 (FFLT…ILFI), 254-274 (ELFL…FLWI), and 295-315 (LPLT…TSGI).

The protein belongs to the complex I subunit 1 family.

It is found in the mitochondrion inner membrane. It catalyses the reaction a ubiquinone + NADH + 5 H(+)(in) = a ubiquinol + NAD(+) + 4 H(+)(out). Core subunit of the mitochondrial membrane respiratory chain NADH dehydrogenase (Complex I) that is believed to belong to the minimal assembly required for catalysis. Complex I functions in the transfer of electrons from NADH to the respiratory chain. The immediate electron acceptor for the enzyme is believed to be ubiquinone. The sequence is that of NADH-ubiquinone oxidoreductase chain 1 (MT-ND1) from Varanus flavescens (Yellow monitor).